Here is a 660-residue protein sequence, read N- to C-terminus: Acetyl-coenzyme A synthetase (660 aa).

CoA contacts are provided by residues 197–200 and Thr317; that span reads RGGK. ATP contacts are provided by residues 397-399, 421-426, Asp512, and Arg528; these read GEP and DTFWQT. Residue Ser536 participates in CoA binding. Arg539 lines the ATP pocket. Residues Val550 and Val555 each coordinate Mg(2+). Lys625 is subject to N6-acetyllysine.

The protein belongs to the ATP-dependent AMP-binding enzyme family. Mg(2+) serves as cofactor. In terms of processing, acetylated. Deacetylation by the SIR2-homolog deacetylase activates the enzyme.

It carries out the reaction acetate + ATP + CoA = acetyl-CoA + AMP + diphosphate. In terms of biological role, catalyzes the conversion of acetate into acetyl-CoA (AcCoA), an essential intermediate at the junction of anabolic and catabolic pathways. AcsA undergoes a two-step reaction. In the first half reaction, AcsA combines acetate with ATP to form acetyl-adenylate (AcAMP) intermediate. In the second half reaction, it can then transfer the acetyl group from AcAMP to the sulfhydryl group of CoA, forming the product AcCoA. This is Acetyl-coenzyme A synthetase from Ralstonia nicotianae (strain ATCC BAA-1114 / GMI1000) (Ralstonia solanacearum).